The following is a 263-amino-acid chain: MENKNVIQKMREKTPLIHCITNYVTINDCANILLSFGASPAMCEAYDEVYDFVSISSALYINLGTLTKEQETAAVLASISAKNHNVPVVIDPVGCPAIKRKVEVINRIAEVGRIDIIKGNIGEIKFLAGMDSETRGVDSLDNGENALDACTQLAKKYNCIVAATGQKDFVSDGKRGSVIKNGTEMLTKVTGAGCMLGALCAATCANFEDKLVSTTAAILSMNIAGEKAYEKAQLPGSFRIALIDNIYMISDEEIWERGNVEWK.

A substrate-binding site is contributed by Met42. Residues Lys118 and Thr164 each coordinate ATP. A substrate-binding site is contributed by Gly191.

It belongs to the Thz kinase family. Mg(2+) is required as a cofactor.

It carries out the reaction 5-(2-hydroxyethyl)-4-methylthiazole + ATP = 4-methyl-5-(2-phosphooxyethyl)-thiazole + ADP + H(+). It functions in the pathway cofactor biosynthesis; thiamine diphosphate biosynthesis; 4-methyl-5-(2-phosphoethyl)-thiazole from 5-(2-hydroxyethyl)-4-methylthiazole: step 1/1. Its function is as follows. Catalyzes the phosphorylation of the hydroxyl group of 4-methyl-5-beta-hydroxyethylthiazole (THZ). The chain is Hydroxyethylthiazole kinase 1 from Clostridium botulinum (strain Okra / Type B1).